An 876-amino-acid polypeptide reads, in one-letter code: Alanine--tRNA ligase (876 aa).

Zn(2+)-binding residues include His-565, His-569, Cys-667, and His-671.

Belongs to the class-II aminoacyl-tRNA synthetase family. The cofactor is Zn(2+).

Its subcellular location is the cytoplasm. It catalyses the reaction tRNA(Ala) + L-alanine + ATP = L-alanyl-tRNA(Ala) + AMP + diphosphate. In terms of biological role, catalyzes the attachment of alanine to tRNA(Ala) in a two-step reaction: alanine is first activated by ATP to form Ala-AMP and then transferred to the acceptor end of tRNA(Ala). Also edits incorrectly charged Ser-tRNA(Ala) and Gly-tRNA(Ala) via its editing domain. In Staphylococcus aureus (strain bovine RF122 / ET3-1), this protein is Alanine--tRNA ligase.